A 540-amino-acid polypeptide reads, in one-letter code: Alanine aminotransferase 2 (540 aa).

At Lys-358 the chain carries N6-(pyridoxal phosphate)lysine.

Belongs to the class-I pyridoxal-phosphate-dependent aminotransferase family. Alanine aminotransferase subfamily. In terms of assembly, homodimer. Pyridoxal 5'-phosphate serves as cofactor.

The enzyme catalyses L-alanine + 2-oxoglutarate = pyruvate + L-glutamate. It participates in amino-acid degradation; L-alanine degradation via transaminase pathway; pyruvate from L-alanine: step 1/1. Catalyzes the reversible transamination between alanine and 2-oxoglutarate to form pyruvate and glutamate. The sequence is that of Alanine aminotransferase 2 (gpt2) from Xenopus laevis (African clawed frog).